A 127-amino-acid chain; its full sequence is Fumarate reductase subunit C (127 aa).

The next 3 helical transmembrane spans lie at 30–50 (ATVLPLILFTLFLTVGLGSLV), 67–87 (LVIAINLVALAGSLFHAQTFF), and 107–127 (IIVLAQWAAVAFISLIVLIVV).

It belongs to the FrdC family. Part of an enzyme complex containing four subunits: a flavoprotein (FrdA), an iron-sulfur protein (FrdB), and two hydrophobic anchor proteins (FrdC and FrdD).

Its subcellular location is the cell inner membrane. Its function is as follows. Anchors the catalytic components of the fumarate reductase complex to the cell membrane, binds quinones. This is Fumarate reductase subunit C from Vibrio cholerae serotype O1 (strain ATCC 39541 / Classical Ogawa 395 / O395).